The chain runs to 408 residues: Dual-specificity RNA methyltransferase RlmN (408 aa).

Glu-126 acts as the Proton acceptor in catalysis. Residues 132 to 373 form the Radical SAM core domain; sequence EEGRGTLCLS…NQAGYASPIR (242 aa). Cys-139 and Cys-384 are joined by a disulfide. [4Fe-4S] cluster-binding residues include Cys-146, Cys-150, and Cys-153. Residues 210-211, Ser-242, 264-266, and Asn-341 each bind S-adenosyl-L-methionine; these read GE and SLH. Catalysis depends on Cys-384, which acts as the S-methylcysteine intermediate.

It belongs to the radical SAM superfamily. RlmN family. [4Fe-4S] cluster serves as cofactor.

The protein localises to the cytoplasm. It carries out the reaction adenosine(2503) in 23S rRNA + 2 reduced [2Fe-2S]-[ferredoxin] + 2 S-adenosyl-L-methionine = 2-methyladenosine(2503) in 23S rRNA + 5'-deoxyadenosine + L-methionine + 2 oxidized [2Fe-2S]-[ferredoxin] + S-adenosyl-L-homocysteine. It catalyses the reaction adenosine(37) in tRNA + 2 reduced [2Fe-2S]-[ferredoxin] + 2 S-adenosyl-L-methionine = 2-methyladenosine(37) in tRNA + 5'-deoxyadenosine + L-methionine + 2 oxidized [2Fe-2S]-[ferredoxin] + S-adenosyl-L-homocysteine. Its function is as follows. Specifically methylates position 2 of adenine 2503 in 23S rRNA and position 2 of adenine 37 in tRNAs. m2A2503 modification seems to play a crucial role in the proofreading step occurring at the peptidyl transferase center and thus would serve to optimize ribosomal fidelity. In Bartonella tribocorum (strain CIP 105476 / IBS 506), this protein is Dual-specificity RNA methyltransferase RlmN.